The primary structure comprises 1086 residues: NAD(P) transhydrogenase, mitochondrial (1086 aa).

Residues 1 to 43 (MANLLKTVVTGCSCPFLSNLGSCKVLPGKKNFLRAFHTHRILW) constitute a mitochondrion transit peptide. The Mitochondrial matrix segment spans residues 44–474 (CKAPVKPGIP…TITPFRKTMT (431 aa)). Position 70 is an N6-acetyllysine (lysine 70). Lysine 117 carries the post-translational modification N6-succinyllysine. 182 to 184 (RVT) provides a ligand contact to NAD(+). Position 224 is an N6-succinyllysine (lysine 224). NAD(+)-binding positions include valine 237, 257 to 259 (DTR), and glycine 287. Lysine 294 carries the N6-succinyllysine modification. NAD(+)-binding residues include glutamate 300 and leucine 319. Position 331 is an N6-succinyllysine (lysine 331). Lysine 397 carries the post-translational modification N6-acetyllysine. 4 helical membrane passes run 475–493 (SASV…GIAA), 501–521 (MVTT…GVTP), 527–546 (LMSV…LVLM), and 558–578 (GLAA…FLVT). At 579 to 595 (QRMLDMFKRPTDPPEYN) the chain is on the mitochondrial matrix side. 5 consecutive transmembrane segments (helical) span residues 596–616 (YLYL…LYSG), 622–642 (IMYL…STQG), 646–666 (LGNA…LGGL), 672–691 (LLAQ…LTIA), and 702–722 (LVAA…IAEY). Residues 723–739 (IIEYPHFATDAAANLTK) are Cytoplasmic-facing. The next 5 membrane-spanning stretches (helical) occupy residues 740 to 760 (IVAY…LVAY), 778 to 797 (HLLN…PFMM), 801 to 819 (FTTG…AVMG), 833 to 853 (VVIT…GFLL), and 857 to 879 (LLTI…MCVA). At 880–1086 (MNRSLANVIL…QAKVRESYQK (207 aa)) the chain is on the mitochondrial matrix side. NADP(+) is bound by residues tyrosine 933, 965–970 (VAGRMP), 1007–1011 (GANDT), 1026–1027 (GM), 1042–1049 (KRSLGVGY), and 1068–1069 (DA). Lysine 1079 is modified (N6-succinyllysine).

In the N-terminal section; belongs to the AlaDH/PNT family. It in the C-terminal section; belongs to the PNT beta subunit family. In terms of assembly, homodimer.

Its subcellular location is the mitochondrion inner membrane. It catalyses the reaction NAD(+) + NADPH + H(+)(in) = NADH + NADP(+) + H(+)(out). The transhydrogenation between NADH and NADP is coupled to respiration and ATP hydrolysis and functions as a proton pump across the membrane. May play a role in reactive oxygen species (ROS) detoxification in the adrenal gland. The protein is NAD(P) transhydrogenase, mitochondrial (NNT) of Ovis aries (Sheep).